Here is a 285-residue protein sequence, read N- to C-terminus: Mitochondrial substrate carrier family protein L (285 aa).

Residues 1–13 (MIASKETKEKIRN) lie on the Mitochondrial intermembrane side of the membrane. 3 Solcar repeats span residues 8–94 (KEKI…VKSK), 103–185 (ISLG…AQRY), and 193–282 (MTMG…VMKF). The chain crosses the membrane as a helical span at residues 14–34 (FIGGFASGAASTLAGHPFDTL). Over 35 to 69 (KVRLQTEGSTGRFRGLAHCFTTTIKEEGFFALYKG) the chain is Mitochondrial matrix. Residues 70-90 (VTPPLLGMSIINSCMFGAMNI) traverse the membrane as a helical segment. The Mitochondrial intermembrane portion of the chain corresponds to 91–102 (VKSKIHTDKSTP). The helical transmembrane segment at 103–123 (ISLGEIMVSGAITGWIVSFVA) threads the bilayer. At 124 to 156 (CPIETVKSKLQVQYTGVKLYNGPIDCIKKIGIR) the chain is on the mitochondrial matrix side. Residues 157-177 (GLYKALIPTGFQRNSLYAYFG) form a helical membrane-spanning segment. Residues 178–198 (CYELAQRYLRREDGSMTMGRS) are Mitochondrial intermembrane-facing. A helical membrane pass occupies residues 199–219 (FIAGGIAGTGFWLTNFPFDVI). Residues 220–256 (RSRIMTMPYNESPPRYKGMIDCAKHIYRVDGLKGFWK) lie on the Mitochondrial matrix side of the membrane. A helical membrane pass occupies residues 257-277 (GFSPCLLRTFPANGATFVAYE). Residues 278 to 285 (CVMKFFPM) are Mitochondrial intermembrane-facing.

The protein belongs to the mitochondrial carrier (TC 2.A.29) family.

The protein resides in the mitochondrion inner membrane. Functionally, mitochondrial solute carriers shuttle metabolites, nucleotides, and cofactors through the mitochondrial inner membrane. This chain is Mitochondrial substrate carrier family protein L (mcfL), found in Dictyostelium discoideum (Social amoeba).